A 269-amino-acid chain; its full sequence is Serine/threonine-protein kinase ZRK7 (269 aa).

The 190-residue stretch at Phe80 to Thr269 folds into the Protein kinase domain. Residues Ile86–Tyr94 and Lys106 each bind ATP. Catalysis depends on Asp205, which acts as the Proton acceptor.

Belongs to the protein kinase superfamily. Ser/Thr protein kinase family. ZRK subfamily.

It catalyses the reaction L-seryl-[protein] + ATP = O-phospho-L-seryl-[protein] + ADP + H(+). The catalysed reaction is L-threonyl-[protein] + ATP = O-phospho-L-threonyl-[protein] + ADP + H(+). This Arabidopsis thaliana (Mouse-ear cress) protein is Serine/threonine-protein kinase ZRK7.